The following is a 392-amino-acid chain: Formate-dependent phosphoribosylglycinamide formyltransferase (392 aa).

N(1)-(5-phospho-beta-D-ribosyl)glycinamide-binding positions include 15–16 (EL) and glutamate 75. ATP-binding positions include arginine 107, lysine 148, 153–158 (SSGKGQ), 188–191 (EEFL), and glutamate 196. The region spanning 112–302 (DLAAGELNLR…EFELHLRAVL (191 aa)) is the ATP-grasp domain. The Mg(2+) site is built by glutamate 261 and glutamate 273. N(1)-(5-phospho-beta-D-ribosyl)glycinamide-binding positions include aspartate 280, lysine 350, and 357 to 358 (RR).

Belongs to the PurK/PurT family. As to quaternary structure, homodimer.

It catalyses the reaction N(1)-(5-phospho-beta-D-ribosyl)glycinamide + formate + ATP = N(2)-formyl-N(1)-(5-phospho-beta-D-ribosyl)glycinamide + ADP + phosphate + H(+). The protein operates within purine metabolism; IMP biosynthesis via de novo pathway; N(2)-formyl-N(1)-(5-phospho-D-ribosyl)glycinamide from N(1)-(5-phospho-D-ribosyl)glycinamide (formate route): step 1/1. Its function is as follows. Involved in the de novo purine biosynthesis. Catalyzes the transfer of formate to 5-phospho-ribosyl-glycinamide (GAR), producing 5-phospho-ribosyl-N-formylglycinamide (FGAR). Formate is provided by PurU via hydrolysis of 10-formyl-tetrahydrofolate. The protein is Formate-dependent phosphoribosylglycinamide formyltransferase of Synechococcus sp. (strain CC9605).